Reading from the N-terminus, the 123-residue chain is Putative iron-sulfur cluster insertion protein ErpA (123 aa).

Iron-sulfur cluster is bound by residues C51, C115, and C117.

This sequence belongs to the HesB/IscA family. Homodimer. Iron-sulfur cluster serves as cofactor.

Required for insertion of 4Fe-4S clusters. This chain is Putative iron-sulfur cluster insertion protein ErpA, found in Burkholderia cenocepacia (strain HI2424).